Reading from the N-terminus, the 339-residue chain is MRVYYDRDADINLIKGKKVVIVGYGSQGHAHALNLRDSGVKDIVIALRKGSASAKKAEAEGFKVMEVAEAAAQADVVMMLTPDELQGDIYRESLHGQMKQGAALLFAHGLNVHFNLIEPRKDLDVLMVAPKGPGHTVRSEYLRGGGVPTLIAIAQDASGNAHDLGLSYASANGGGRAGIIETTFKEECETDLFGEQVVLCGGLVELIKAGFETLVEAGYAPEMAYFECLHEVKLIVDLIYEGGIANMNYSISNTAEYGEYVTGPRIITPETKAEMKRVLTDIQSGTFTRNWMLENKVNQTSFKATRARNAAHPIEEVGERLRGMMPWIKEKALVDKTKN.

Residues 1–182 form the KARI N-terminal Rossmann domain; it reads MRVYYDRDAD…GGGRAGIIET (182 aa). NADP(+)-binding positions include 24–27, Arg-48, Ser-51, Ser-53, and 83–86; these read YGSQ and DELQ. Residue His-108 is part of the active site. Residue Gly-134 participates in NADP(+) binding. In terms of domain architecture, KARI C-terminal knotted spans 183–328; sequence TFKEECETDL…ERLRGMMPWI (146 aa). The Mg(2+) site is built by Asp-191, Glu-195, Glu-227, and Glu-231. A substrate-binding site is contributed by Ser-252.

This sequence belongs to the ketol-acid reductoisomerase family. Mg(2+) serves as cofactor.

The catalysed reaction is (2R)-2,3-dihydroxy-3-methylbutanoate + NADP(+) = (2S)-2-acetolactate + NADPH + H(+). It carries out the reaction (2R,3R)-2,3-dihydroxy-3-methylpentanoate + NADP(+) = (S)-2-ethyl-2-hydroxy-3-oxobutanoate + NADPH + H(+). Its pathway is amino-acid biosynthesis; L-isoleucine biosynthesis; L-isoleucine from 2-oxobutanoate: step 2/4. It functions in the pathway amino-acid biosynthesis; L-valine biosynthesis; L-valine from pyruvate: step 2/4. Functionally, involved in the biosynthesis of branched-chain amino acids (BCAA). Catalyzes an alkyl-migration followed by a ketol-acid reduction of (S)-2-acetolactate (S2AL) to yield (R)-2,3-dihydroxy-isovalerate. In the isomerase reaction, S2AL is rearranged via a Mg-dependent methyl migration to produce 3-hydroxy-3-methyl-2-ketobutyrate (HMKB). In the reductase reaction, this 2-ketoacid undergoes a metal-dependent reduction by NADPH to yield (R)-2,3-dihydroxy-isovalerate. The sequence is that of Ketol-acid reductoisomerase (NADP(+)) from Methylobacterium sp. (strain 4-46).